The sequence spans 167 residues: 2-amino-4-hydroxy-6-hydroxymethyldihydropteridine pyrophosphokinase (167 aa).

The protein belongs to the HPPK family.

It carries out the reaction 6-hydroxymethyl-7,8-dihydropterin + ATP = (7,8-dihydropterin-6-yl)methyl diphosphate + AMP + H(+). Its pathway is cofactor biosynthesis; tetrahydrofolate biosynthesis; 2-amino-4-hydroxy-6-hydroxymethyl-7,8-dihydropteridine diphosphate from 7,8-dihydroneopterin triphosphate: step 4/4. Catalyzes the transfer of pyrophosphate from adenosine triphosphate (ATP) to 6-hydroxymethyl-7,8-dihydropterin, an enzymatic step in folate biosynthesis pathway. The sequence is that of 2-amino-4-hydroxy-6-hydroxymethyldihydropteridine pyrophosphokinase (folK) from Bacillus subtilis (strain 168).